The following is a 182-amino-acid chain: P21 prophage-derived terminase small subunit (182 aa).

31-36 (SKGSKG) is an ATP binding site.

Belongs to the terminase small subunit family. In terms of assembly, heterooligomer of gp1 and gp2.

Its function is as follows. Involved in the initiation of the phage DNA packaging into the prohead. Processes replicating concatemeric DNA into pieces of unit length with cohesive ends. The protein is P21 prophage-derived terminase small subunit (nohA) of Escherichia coli O6:H1 (strain CFT073 / ATCC 700928 / UPEC).